Reading from the N-terminus, the 312-residue chain is sn-1-specific diacylglycerol lipase ABHD11 (312 aa).

The N-terminal 14 residues, 1-14 (MITFKSFHCSRGWH), are a transit peptide targeting the mitochondrion. The AB hydrolase-1 domain occupies 62–297 (PPLVLLHGLF…GAGHWVHADK (236 aa)). Residues serine 136, glutamate 232, and histidine 291 each act as charge relay system in the active site.

Belongs to the AB hydrolase superfamily. In terms of processing, phosphorylated.

Its subcellular location is the mitochondrion. It is found in the mitochondrion matrix. It carries out the reaction 1-octadecanoyl-2-(5Z,8Z,11Z,14Z-eicosatetraenoyl)-sn-glycerol + H2O = 2-(5Z,8Z,11Z,14Z-eicosatetraenoyl)-glycerol + octadecanoate + H(+). The catalysed reaction is a 1,2-diacyl-sn-glycerol + H2O = a 2-acylglycerol + a fatty acid + H(+). It catalyses the reaction a 1,3-diacyl-sn-glycerol + H2O = a 1-acyl-sn-glycerol + a fatty acid + H(+). The enzyme catalyses 1-octadecanoyl-2-(9Z-octadecenoyl)-sn-glycerol + H2O = 2-(9Z-octadecenoyl)-glycerol + octadecanoate + H(+). It carries out the reaction 1-octadecanoyl-2-(4Z,7Z,10Z,13Z,16Z,19Z-docosahexaenoyl)-sn-glycerol + H2O = 2-(4Z,7Z,10Z,13Z,16Z,19Z-docosahexaenoyl)-glycerol + octadecanoate + H(+). The catalysed reaction is 1,2-didecanoylglycerol + H2O = decanoylglycerol + decanoate + H(+). In terms of biological role, catalyzes the hydrolysis of diacylglycerol in vitro and may function as a key regulator in lipid metabolism, namely by regulating the intracellular levels of diacylglycerol. 1,2-diacyl-sn-glycerols are the preferred substrate over 1,3-diacyl-sn-glycerols. The enzyme hydrolyzes stearate in preference to palmitate from the sn-1 position of 1,2-diacyl-sn-glycerols. The polypeptide is sn-1-specific diacylglycerol lipase ABHD11 (Xenopus laevis (African clawed frog)).